A 393-amino-acid chain; its full sequence is MESFLFTSESVNEGHPDKLCDQISDAILDACLEQDPESKVACETCTKTNMVMVFGEITTKANVDYEKIVRETCREIGFISDDVGLDADNCKVLVNIEQQSPDIAQGVHGHLTKKPEEIGAGDQGHMFGYATDETPELMPLSHVLATKLGAKLTEVRKNGTCAWLRPDGKTQVTVEYFNENGAMVPVRVHTVLISTQHDETVTNDEIAADLKEHVIKPVIPEKYLDEKTIFHLNPSGRFVIGGPHGDAGLTGRKIIIDTYGGWGAHGGGAFSGKDPTKVDRSGAYIVRQAAKSIVASGLARRCIVQVSYAIGVPEPLSVFVDSYGTGKIPDKEILEIVKESFDFRPGMISINLDLKRGGNGRFLKTAAYGHFGRDDADFTWEVVKPLKSNKVQA.

Glu-9 provides a ligand contact to Mg(2+). His-15 is a binding site for ATP. Residue Glu-43 coordinates K(+). The L-methionine site is built by Glu-56 and Gln-99. Residues 167–169 (DGK), 235–238 (SGRF), Asp-246, 252–253 (RK), Ala-269, Lys-273, and Lys-277 each bind ATP. Residue Asp-246 coordinates L-methionine. Lys-277 is a binding site for L-methionine.

The protein belongs to the AdoMet synthase family. In terms of assembly, homotetramer. It depends on Mn(2+) as a cofactor. Requires Mg(2+) as cofactor. The cofactor is Co(2+). K(+) is required as a cofactor. In terms of tissue distribution, mostly expressed in flowers, seedpods and roots, and, to a lower extent, in stems and leaves.

Its subcellular location is the cytoplasm. The enzyme catalyses L-methionine + ATP + H2O = S-adenosyl-L-methionine + phosphate + diphosphate. It participates in amino-acid biosynthesis; S-adenosyl-L-methionine biosynthesis; S-adenosyl-L-methionine from L-methionine: step 1/1. In terms of biological role, catalyzes the formation of S-adenosylmethionine from methionine and ATP. The reaction comprises two steps that are both catalyzed by the same enzyme: formation of S-adenosylmethionine (AdoMet) and triphosphate, and subsequent hydrolysis of the triphosphate. The polypeptide is S-adenosylmethionine synthase 2 (MSAMS2) (Brassica juncea (Indian mustard)).